We begin with the raw amino-acid sequence, 241 residues long: Uridylate kinase (241 aa).

14–17 lines the ATP pocket; the sequence is KLSG. G56 is a UMP binding site. G57 and R61 together coordinate ATP. UMP contacts are provided by residues D77 and 138–145; that span reads TGNPFFTT. Positions 165, 171, and 174 each coordinate ATP.

This sequence belongs to the UMP kinase family. Homohexamer.

Its subcellular location is the cytoplasm. The enzyme catalyses UMP + ATP = UDP + ADP. The protein operates within pyrimidine metabolism; CTP biosynthesis via de novo pathway; UDP from UMP (UMPK route): step 1/1. With respect to regulation, inhibited by UTP. Functionally, catalyzes the reversible phosphorylation of UMP to UDP. The sequence is that of Uridylate kinase from Psychrobacter cryohalolentis (strain ATCC BAA-1226 / DSM 17306 / VKM B-2378 / K5).